A 253-amino-acid chain; its full sequence is 2-C-methyl-D-erythritol 4-phosphate cytidylyltransferase (253 aa).

The segment at M1 to L28 is disordered.

This sequence belongs to the IspD/TarI cytidylyltransferase family. IspD subfamily.

The enzyme catalyses 2-C-methyl-D-erythritol 4-phosphate + CTP + H(+) = 4-CDP-2-C-methyl-D-erythritol + diphosphate. The protein operates within isoprenoid biosynthesis; isopentenyl diphosphate biosynthesis via DXP pathway; isopentenyl diphosphate from 1-deoxy-D-xylulose 5-phosphate: step 2/6. Functionally, catalyzes the formation of 4-diphosphocytidyl-2-C-methyl-D-erythritol from CTP and 2-C-methyl-D-erythritol 4-phosphate (MEP). The protein is 2-C-methyl-D-erythritol 4-phosphate cytidylyltransferase of Ralstonia nicotianae (strain ATCC BAA-1114 / GMI1000) (Ralstonia solanacearum).